A 173-amino-acid chain; its full sequence is Crossover junction endodeoxyribonuclease RuvC (173 aa).

Residues D11, E71, and D143 contribute to the active site. Mg(2+) is bound by residues D11, E71, and D143.

This sequence belongs to the RuvC family. In terms of assembly, homodimer which binds Holliday junction (HJ) DNA. The HJ becomes 2-fold symmetrical on binding to RuvC with unstacked arms; it has a different conformation from HJ DNA in complex with RuvA. In the full resolvosome a probable DNA-RuvA(4)-RuvB(12)-RuvC(2) complex forms which resolves the HJ. Requires Mg(2+) as cofactor.

It is found in the cytoplasm. The enzyme catalyses Endonucleolytic cleavage at a junction such as a reciprocal single-stranded crossover between two homologous DNA duplexes (Holliday junction).. In terms of biological role, the RuvA-RuvB-RuvC complex processes Holliday junction (HJ) DNA during genetic recombination and DNA repair. Endonuclease that resolves HJ intermediates. Cleaves cruciform DNA by making single-stranded nicks across the HJ at symmetrical positions within the homologous arms, yielding a 5'-phosphate and a 3'-hydroxyl group; requires a central core of homology in the junction. The consensus cleavage sequence is 5'-(A/T)TT(C/G)-3'. Cleavage occurs on the 3'-side of the TT dinucleotide at the point of strand exchange. HJ branch migration catalyzed by RuvA-RuvB allows RuvC to scan DNA until it finds its consensus sequence, where it cleaves and resolves the cruciform DNA. This chain is Crossover junction endodeoxyribonuclease RuvC, found in Brucella abortus (strain 2308).